A 243-amino-acid chain; its full sequence is Adenosylcobinamide-GDP ribazoletransferase (243 aa).

The next 5 helical transmembrane spans lie at 31-51 (LLFY…FNAL), 55-75 (APLL…SGGL), 109-129 (IAVV…VALI), 135-155 (IGLL…FLGT), and 188-208 (VVLA…CFYW).

It belongs to the CobS family. Mg(2+) serves as cofactor.

It localises to the cell inner membrane. The enzyme catalyses alpha-ribazole + adenosylcob(III)inamide-GDP = adenosylcob(III)alamin + GMP + H(+). The catalysed reaction is alpha-ribazole 5'-phosphate + adenosylcob(III)inamide-GDP = adenosylcob(III)alamin 5'-phosphate + GMP + H(+). Its pathway is cofactor biosynthesis; adenosylcobalamin biosynthesis; adenosylcobalamin from cob(II)yrinate a,c-diamide: step 7/7. Joins adenosylcobinamide-GDP and alpha-ribazole to generate adenosylcobalamin (Ado-cobalamin). Also synthesizes adenosylcobalamin 5'-phosphate from adenosylcobinamide-GDP and alpha-ribazole 5'-phosphate. The polypeptide is Adenosylcobinamide-GDP ribazoletransferase (Pseudomonas syringae pv. tomato (strain ATCC BAA-871 / DC3000)).